We begin with the raw amino-acid sequence, 113 residues long: MTKELKVQSSPQALKAGHLPAVKAGGMRVSKKQGNDENSAPEKNAKKTLQEKPSSVLNMTKMQAMNILAGELEKLSHDFPGEAAQIAHQKPRPTVEKIIMPKRLYLIQQPRRC.

A disordered region spans residues M1–P53.

It belongs to the DAP-DAPL1 family. Associates with ribosomes; preventing translation. Interacts with eiF5a (eif5a and eif5a2); preventing translation.

In terms of biological role, ribosome-binding protein that promotes ribosome hibernation, a process during which ribosomes are stabilized in an inactive state and preserved from proteasomal degradation. Acts via its association with eiF5a (eif5a and eif5a2) at the polypeptide exit tunnel of the ribosome, preventing mRNA translation. Plays a key role in ribosome hibernation in the mature egg by preventing mRNA translation, leading to ribosome inactivation. Ribosomes, which are produced in large quantities during oogenesis, are stored and translationally repressed in the egg and early embryo. The chain is Death-associated protein-like 1.S (dapl1.S) from Xenopus laevis (African clawed frog).